A 122-amino-acid polypeptide reads, in one-letter code: Large ribosomal subunit protein bL12 (122 aa).

The protein belongs to the bacterial ribosomal protein bL12 family. As to quaternary structure, homodimer. Part of the ribosomal stalk of the 50S ribosomal subunit. Forms a multimeric L10(L12)X complex, where L10 forms an elongated spine to which 2 to 4 L12 dimers bind in a sequential fashion. Binds GTP-bound translation factors.

Its function is as follows. Forms part of the ribosomal stalk which helps the ribosome interact with GTP-bound translation factors. Is thus essential for accurate translation. The protein is Large ribosomal subunit protein bL12 of Acinetobacter baumannii (strain AB0057).